We begin with the raw amino-acid sequence, 423 residues long: MGVDLRQVVAGILTITMFVMLGQMLHRDYFDAVQEKVQGDAHDIEFHGSKVAVEDGLVRAFEAGTKGPWMEDSHELKPCWSISQSDEAVSSKGYVTFSLTNGPEYHVSQITDAVMVAKHLGATLVLPDIRGSKPGDEMKFEDIYDVDKLIKTLESVVKVVRKLPSHVSLRDIAIVKVPTRVAEDYIKEHIDPIFKSKGNIRVTTYFPSVNLRKSSQGAETDPVSCLAMFGSLELQPAVNELVESMIQRLKTHSKKSGGRFIAIDLRVEILEKKNCHETGAVGSKTCYNAQEIALFLRKLGFDSDTTIYLTQPRWESSLNILKDIFPKTYTKEAIMPSDKKTKYLELENSEYENVIDFYISSRSDVFVPAIPGLFYANTVGKRIALGKPQVLVPAEISGTSGLPANYISPYISKKNHLAYSCFC.

Topologically, residues 1–6 are cytoplasmic; sequence MGVDLR. Residues 7–26 form a helical; Signal-anchor for type II membrane protein membrane-spanning segment; it reads QVVAGILTITMFVMLGQMLH. Over 27–423 the chain is Lumenal; that stretch reads RDYFDAVQEK…KNHLAYSCFC (397 aa). 264 to 266 serves as a coordination point for substrate; the sequence is DLR.

Belongs to the glycosyltransferase GT106 family. As to expression, widely expressed.

The protein localises to the golgi apparatus membrane. It functions in the pathway glycan biosynthesis. Glycosyltransferase involved in mannan biosynthesis. The polypeptide is Protein MANNAN SYNTHESIS-RELATED 2 (Arabidopsis thaliana (Mouse-ear cress)).